The primary structure comprises 69 residues: uncharacterized protein (69 aa).

The Cytoplasmic segment spans residues 1-15 (MLLYIVIIVACIISK). The helical transmembrane segment at 16-36 (LVPNEYWAIHLFFIIMIFMVY) threads the bilayer. The Extracellular portion of the chain corresponds to 37 to 69 (MYEKLDIHQKYQFWNYTMSGLSGHNVQITCKCY). Asn-51 carries N-linked (GlcNAc...) asparagine; by host glycosylation.

It belongs to the asfivirus X69R family.

The protein localises to the host membrane. This is an uncharacterized protein from Ornithodoros (relapsing fever ticks).